The sequence spans 45 residues: Small, acid-soluble spore protein P (45 aa).

The span at 1–12 (MTERHTAKDIRK) shows a compositional bias: basic and acidic residues. Positions 1-45 (MTERHTAKDIRKNAPKGENPGQPEPLSGSKKVKKRNHVSQTNGEG) are disordered.

Belongs to the SspP family.

It localises to the spore core. This Halalkalibacterium halodurans (strain ATCC BAA-125 / DSM 18197 / FERM 7344 / JCM 9153 / C-125) (Bacillus halodurans) protein is Small, acid-soluble spore protein P.